A 264-amino-acid polypeptide reads, in one-letter code: 3'-5' ssDNA/RNA exonuclease TatD (264 aa).

Residues Glu-92, His-128, and His-153 each contribute to the a divalent metal cation site.

The protein belongs to the metallo-dependent hydrolases superfamily. TatD-type hydrolase family. TatD subfamily. Monomer. It depends on Mg(2+) as a cofactor.

It localises to the cytoplasm. Its function is as follows. 3'-5' exonuclease that prefers single-stranded DNA and RNA. May play a role in the H(2)O(2)-induced DNA damage repair. The polypeptide is 3'-5' ssDNA/RNA exonuclease TatD (Dickeya dadantii (strain 3937) (Erwinia chrysanthemi (strain 3937))).